The chain runs to 506 residues: ATP synthase subunit alpha (506 aa).

172 to 179 serves as a coordination point for ATP; sequence GDRKTGKT.

It belongs to the ATPase alpha/beta chains family. In terms of assembly, F-type ATPases have 2 components, CF(1) - the catalytic core - and CF(0) - the membrane proton channel. CF(1) has five subunits: alpha(3), beta(3), gamma(1), delta(1), epsilon(1). CF(0) has three main subunits: a(1), b(2) and c(9-12). The alpha and beta chains form an alternating ring which encloses part of the gamma chain. CF(1) is attached to CF(0) by a central stalk formed by the gamma and epsilon chains, while a peripheral stalk is formed by the delta and b chains.

The protein resides in the cell membrane. It carries out the reaction ATP + H2O + 4 H(+)(in) = ADP + phosphate + 5 H(+)(out). Produces ATP from ADP in the presence of a proton gradient across the membrane. The alpha chain is a regulatory subunit. The chain is ATP synthase subunit alpha from Lactobacillus gasseri (strain ATCC 33323 / DSM 20243 / BCRC 14619 / CIP 102991 / JCM 1131 / KCTC 3163 / NCIMB 11718 / NCTC 13722 / AM63).